The following is a 31-amino-acid chain: Cytochrome b6-f complex subunit 6 (31 aa).

Residues 4 to 24 traverse the membrane as a helical segment; that stretch reads ITSYFGFLLAALTITSALFIG.

The protein belongs to the PetL family. In terms of assembly, the 4 large subunits of the cytochrome b6-f complex are cytochrome b6, subunit IV (17 kDa polypeptide, PetD), cytochrome f and the Rieske protein, while the 4 small subunits are PetG, PetL, PetM and PetN. The complex functions as a dimer.

It localises to the plastid. The protein localises to the chloroplast thylakoid membrane. Its function is as follows. Component of the cytochrome b6-f complex, which mediates electron transfer between photosystem II (PSII) and photosystem I (PSI), cyclic electron flow around PSI, and state transitions. PetL is important for photoautotrophic growth as well as for electron transfer efficiency and stability of the cytochrome b6-f complex. This Hamamelis virginiana (Witch-hazel) protein is Cytochrome b6-f complex subunit 6.